The sequence spans 180 residues: Large ribosomal subunit protein uL5 (180 aa).

This sequence belongs to the universal ribosomal protein uL5 family. In terms of assembly, part of the 50S ribosomal subunit; part of the 5S rRNA/L5/L18/L25 subcomplex. Contacts the 5S rRNA and the P site tRNA. Forms a bridge to the 30S subunit in the 70S ribosome.

Its function is as follows. This is one of the proteins that bind and probably mediate the attachment of the 5S RNA into the large ribosomal subunit, where it forms part of the central protuberance. In the 70S ribosome it contacts protein S13 of the 30S subunit (bridge B1b), connecting the 2 subunits; this bridge is implicated in subunit movement. Contacts the P site tRNA; the 5S rRNA and some of its associated proteins might help stabilize positioning of ribosome-bound tRNAs. The sequence is that of Large ribosomal subunit protein uL5 from Ruminiclostridium cellulolyticum (strain ATCC 35319 / DSM 5812 / JCM 6584 / H10) (Clostridium cellulolyticum).